The sequence spans 553 residues: Urocanate hydratase (553 aa).

NAD(+)-binding positions include 45–46, Q123, 169–171, D189, R194, 235–236, 256–260, 266–267, Y315, and G485; these read GG, GMG, NA, QTSAH, and YV.

The protein belongs to the urocanase family. NAD(+) serves as cofactor.

It is found in the cytoplasm. It carries out the reaction 4-imidazolone-5-propanoate = trans-urocanate + H2O. It functions in the pathway amino-acid degradation; L-histidine degradation into L-glutamate; N-formimidoyl-L-glutamate from L-histidine: step 2/3. In terms of biological role, catalyzes the conversion of urocanate to 4-imidazolone-5-propionate. In Staphylococcus aureus (strain MRSA252), this protein is Urocanate hydratase.